A 360-amino-acid chain; its full sequence is MSSPVTAQRPPAAPPLIAVDAMGGDHAPREIVAGAVRAVREHGLRLALVGRSSELAPLVAAEQAARELPIVHAEEALAMHEGALAAWRRARSSVAVGCKLVRQGTAAALVSAGSTGGVVSTATVRLRTLPGVLRPALALVLPTTPTPTILLDAGANADAKPEMLVQFAHLGAAYARVGHGIAEPRVGILTIGSEPGKGNKLARRAAELLSANATEDRLDFRGNIEGHDLLAGLVDVVVTDGFTGNVALKSVEGAVRFAFDEIRAALTSSPLARFGTLFQRRALRELRTRFDSETYGGAVLLGLNGTVVIAHGASRAEGIAHACLLAHNLVVGRITDQIRRGIAGVSRTPSWLHRLSAPEE.

The protein belongs to the PlsX family. Homodimer. Probably interacts with PlsY.

The protein resides in the cytoplasm. It catalyses the reaction a fatty acyl-[ACP] + phosphate = an acyl phosphate + holo-[ACP]. It participates in lipid metabolism; phospholipid metabolism. Functionally, catalyzes the reversible formation of acyl-phosphate (acyl-PO(4)) from acyl-[acyl-carrier-protein] (acyl-ACP). This enzyme utilizes acyl-ACP as fatty acyl donor, but not acyl-CoA. This is Phosphate acyltransferase from Thermobifida fusca (strain YX).